The primary structure comprises 105 residues: Translation initiation factor 1A (105 aa).

The region spanning 12 to 87 is the S1-like domain; it reads TRVRTPREEN…QKCDIIWRYT (76 aa).

The protein belongs to the eIF-1A family.

Seems to be required for maximal rate of protein biosynthesis. Enhances ribosome dissociation into subunits and stabilizes the binding of the initiator Met-tRNA(I) to 40 S ribosomal subunits. The chain is Translation initiation factor 1A (eIF1A) from Methanococcus aeolicus (strain ATCC BAA-1280 / DSM 17508 / OCM 812 / Nankai-3).